Consider the following 165-residue polypeptide: Crossover junction endodeoxyribonuclease RuvC (165 aa).

Active-site residues include D7, E67, and D140. Mg(2+)-binding residues include D7, E67, and D140.

This sequence belongs to the RuvC family. As to quaternary structure, homodimer which binds Holliday junction (HJ) DNA. The HJ becomes 2-fold symmetrical on binding to RuvC with unstacked arms; it has a different conformation from HJ DNA in complex with RuvA. In the full resolvosome a probable DNA-RuvA(4)-RuvB(12)-RuvC(2) complex forms which resolves the HJ. Mg(2+) is required as a cofactor.

It localises to the cytoplasm. The catalysed reaction is Endonucleolytic cleavage at a junction such as a reciprocal single-stranded crossover between two homologous DNA duplexes (Holliday junction).. In terms of biological role, the RuvA-RuvB-RuvC complex processes Holliday junction (HJ) DNA during genetic recombination and DNA repair. Endonuclease that resolves HJ intermediates. Cleaves cruciform DNA by making single-stranded nicks across the HJ at symmetrical positions within the homologous arms, yielding a 5'-phosphate and a 3'-hydroxyl group; requires a central core of homology in the junction. The consensus cleavage sequence is 5'-(A/T)TT(C/G)-3'. Cleavage occurs on the 3'-side of the TT dinucleotide at the point of strand exchange. HJ branch migration catalyzed by RuvA-RuvB allows RuvC to scan DNA until it finds its consensus sequence, where it cleaves and resolves the cruciform DNA. This is Crossover junction endodeoxyribonuclease RuvC from Halothermothrix orenii (strain H 168 / OCM 544 / DSM 9562).